A 217-amino-acid polypeptide reads, in one-letter code: Probable glutathione S-transferase (217 aa).

A GST N-terminal domain is found at 2–81; that stretch reads AEVKLLGLRY…YIDEAFEGPS (80 aa). Residues S12, K39, I53, and 65–66 each bind glutathione; that span reads ES. The GST C-terminal domain occupies 86–210; it reads DPYDRALARF…ELLIRYRAYI (125 aa).

This sequence belongs to the GST superfamily. HSP26 family.

It carries out the reaction RX + glutathione = an S-substituted glutathione + a halide anion + H(+). In Solanum tuberosum (Potato), this protein is Probable glutathione S-transferase (PRP1).